The chain runs to 147 residues: uncharacterized protein (147 aa).

Residues 4-120 (KWAKRFFQMA…EQTEDFLSRW (117 aa)) form the CMP/dCMP-type deaminase domain. A Zn(2+)-binding site is contributed by histidine 67. The active-site Proton donor is the glutamate 69. The Zn(2+) site is built by cysteine 92 and cysteine 95.

The protein belongs to the cytidine and deoxycytidylate deaminase family. It depends on Zn(2+) as a cofactor.

This is an uncharacterized protein from Aliivibrio fischeri (Vibrio fischeri).